A 105-amino-acid polypeptide reads, in one-letter code: Endogenous retrovirus group K member 16 Rec protein (105 aa).

The tract at residues 1–41 is disordered; it reads MNPSEMQRKAPPRRRRHRNRAPSSHKMNKMMMSEEQMKLPS. Residues 10–20 show a composition bias toward basic residues; sequence APPRRRRHRNR. The Nuclear localization signal motif lies at 13–20; it reads RRRRHRNR. The Nuclear export signal signature appears at 50–59; sequence WAQLNKLTQL.

As to quaternary structure, forms homodimers, homotrimers, and homotetramers via a C-terminal domain. Associates with XPO1 and with ZNF145.

It is found in the cytoplasm. The protein localises to the nucleus. The protein resides in the nucleolus. Retroviral replication requires the nuclear export and translation of unspliced, singly-spliced and multiply-spliced derivatives of the initial genomic transcript. Rec interacts with a highly structured RNA element (RcRE) present in the viral 3'LTR and recruits the cellular nuclear export machinery. This permits export to the cytoplasm of unspliced genomic or incompletely spliced subgenomic viral transcripts. The sequence is that of Endogenous retrovirus group K member 16 Rec protein (ERVK-16) from Homo sapiens (Human).